Consider the following 591-residue polypeptide: MANSDEIHYDLVEDDEFDIVNIVVEGLDETSIHSPPPSVSAATHGGVKNPSFSQRRTSGRHDFQKWLHEELGKYPAKTHAQKVVEELDAPKSGLIYLRGFNEPLYPYSDQGPPFRQQRHFFYLSGADFPGCAVTYDIPRQHLIVWIRRNDPRLSLWYGTTPSIEEVKSKSDVSDVRYIDDVTKYLHANLTPDTTLFLLHPDQTPKLEPPSLNLRHRFKGPKIDTTSLLPAIEAARVIKTPHEISLIRRAVALTSLAHRMVLQRIKHLSNEREAHAVFEGFCISQGAPRQSYAVIAASGANASTLHYEANDQPLEGKQTMLLDAGCEWGCYASDVTRTFPLKGKWTKEGEEIYKVVERMQRETIDAIRPGRLYYKLHLVACLVAVEELMKLGILHNGTRTEILAKGTVAAFFPHGLGHHVGLEVHDVSGRERLLLSSSSSSGLSRQAISGSRRLPPPRNMKREQVTPEDLAAMYREAMMDTAGDEVEQSAVAPPPPYRGRQRLKENMVVTVEPGIYFHRPYIQSFFLSNPDHAKYINTKVLDRYWDVGGVRIEDCILVTKDGYENLTTAPKGKEALKIINAGIPGFPCDGKA.

A disordered region spans residues 31–59 (SIHSPPPSVSAATHGGVKNPSFSQRRTSG). Residues Asp322 and Asp333 each contribute to the Mn(2+) site. The segment covering 441-450 (GLSRQAISGS) has biased composition (low complexity). The tract at residues 441 to 460 (GLSRQAISGSRRLPPPRNMK) is disordered. Residues Glu511 and Glu552 each coordinate Mn(2+).

It belongs to the peptidase M24B family. Requires Mn(2+) as cofactor.

The catalysed reaction is Release of any N-terminal amino acid, including proline, that is linked to proline, even from a dipeptide or tripeptide.. Its function is as follows. Catalyzes the removal of a penultimate prolyl residue from the N-termini of peptides. This Sordaria macrospora (strain ATCC MYA-333 / DSM 997 / K(L3346) / K-hell) protein is Probable Xaa-Pro aminopeptidase PEPP (PEPP).